The chain runs to 204 residues: Superoxide dismutase [Mn] (204 aa).

Histidine 27 lines the Mn(2+) pocket. A phosphothreonine mark is found at threonine 34 and threonine 70. The Mn(2+) site is built by histidine 82, aspartate 164, and histidine 168.

Belongs to the iron/manganese superoxide dismutase family. Homodimer. Mn(2+) serves as cofactor.

It carries out the reaction 2 superoxide + 2 H(+) = H2O2 + O2. Functionally, destroys superoxide anion radicals which are normally produced within the cells and which are toxic to biological systems. This chain is Superoxide dismutase [Mn] (sodA), found in Geobacillus stearothermophilus (Bacillus stearothermophilus).